A 44-amino-acid chain; its full sequence is Diuretic hormone (44 aa).

V44 carries the valine amide modification.

The protein resides in the secreted. In terms of biological role, regulation of fluid secretion. Stimulates primary urine secretion by Malpighian tubules and causes a dose-dependent stimulation of cAMP levels in the tubules. May act as clearance peptide in that it may remove metabolic waste from the hemolymph. The protein is Diuretic hormone of Stomoxys calcitrans (Stable fly).